We begin with the raw amino-acid sequence, 247 residues long: MQEFNPANVPAHVAIIMDGNGRWANARGLPRTMGHRKGVEAVRGAVRTAAEIGIRYLTLFAFSSENWNRPENEVSDLMGLLKAFIRRDLADLHRENVRIRVIGDRSNLSGDILPLLIEAEETTIANTGITVVIAFNYGARDELARAMRRLAGEVAAGRLRPEEITAERISSTIDTAGIPDPDLIIRTSGEERLSNFLLWQGAYSELLFIPDLWPDFTRETFFAAIEQYACRERRFGGLTQPTLAVGS.

Aspartate 18 is a catalytic residue. Mg(2+) is bound at residue aspartate 18. Substrate is bound by residues 19-22 (GNGR), tryptophan 23, arginine 31, histidine 35, and 63-65 (SSE). Asparagine 66 (proton acceptor) is an active-site residue. Residues tryptophan 67, arginine 69, arginine 186, and 192 to 194 (RLS) each bind substrate. Glutamate 205 serves as a coordination point for Mg(2+).

This sequence belongs to the UPP synthase family. As to quaternary structure, homodimer. The cofactor is Mg(2+).

In terms of biological role, catalyzes the condensation of isopentenyl diphosphate (IPP) with allylic pyrophosphates generating different type of terpenoids. The protein is Isoprenyl transferase of Rhizobium meliloti (strain 1021) (Ensifer meliloti).